A 79-amino-acid polypeptide reads, in one-letter code: Acyl carrier protein (79 aa).

The 77-residue stretch at 1 to 77 (MNNVEKKIKK…KSIDYINNKN (77 aa)) folds into the Carrier domain. Position 37 is an O-(pantetheine 4'-phosphoryl)serine (S37).

This sequence belongs to the acyl carrier protein (ACP) family. 4'-phosphopantetheine is transferred from CoA to a specific serine of apo-ACP by AcpS. This modification is essential for activity because fatty acids are bound in thioester linkage to the sulfhydryl of the prosthetic group.

It is found in the cytoplasm. The protein operates within lipid metabolism; fatty acid biosynthesis. Functionally, carrier of the growing fatty acid chain in fatty acid biosynthesis. The protein is Acyl carrier protein of Buchnera aphidicola subsp. Schizaphis graminum (strain Sg).